Consider the following 462-residue polypeptide: Glycine--tRNA ligase (462 aa).

Positions 100 and 175 each coordinate substrate. Residues Arg-207–Glu-209, Phe-217–Phe-222, Glu-291–Leu-292, and Gly-335–Arg-338 contribute to the ATP site. A substrate-binding site is contributed by Phe-222–Glu-226. Glu-331–Gly-335 is a binding site for substrate.

Belongs to the class-II aminoacyl-tRNA synthetase family. In terms of assembly, homodimer.

It is found in the cytoplasm. The enzyme catalyses tRNA(Gly) + glycine + ATP = glycyl-tRNA(Gly) + AMP + diphosphate. Catalyzes the attachment of glycine to tRNA(Gly). This is Glycine--tRNA ligase from Clostridium acetobutylicum (strain ATCC 824 / DSM 792 / JCM 1419 / IAM 19013 / LMG 5710 / NBRC 13948 / NRRL B-527 / VKM B-1787 / 2291 / W).